The sequence spans 332 residues: T-cell surface glycoprotein CD1b2 (332 aa).

The signal sequence occupies residues 1–17; it reads MLLLVLALLAVLFPAGD. At 18–301 the chain is on the extracellular side; that stretch reads TQDAFPEPIS…ILYWGNSSIG (284 aa). Residues Asn38, Asn75, and Asn146 are each glycosylated (N-linked (GlcNAc...) asparagine). 3 disulfide bridges follow: Cys120/Cys184, Cys149/Cys163, and Cys224/Cys279. Residues 185 to 295 enclose the Ig-like domain; it reads PRYLMSVLEA…LGGQDIILYW (111 aa). A glycan (N-linked (GlcNAc...) asparagine) is linked at Asn297. Residues 302–322 traverse the membrane as a helical segment; that stretch reads WIILAVFVSCLIVLLFYVLWF. The Cytoplasmic portion of the chain corresponds to 323 to 332; sequence YKHWSYQDIL. The Internalization signal signature appears at 328 to 331; it reads YQDI.

In terms of assembly, heterodimer with B2M (beta-2-microglobulin). Interacts with saposin C.

The protein localises to the cell membrane. It is found in the endosome membrane. Its subcellular location is the lysosome membrane. Functionally, antigen-presenting protein that binds self and non-self lipid and glycolipid antigens and presents them to T-cell receptors on natural killer T-cells. The chain is T-cell surface glycoprotein CD1b2 (CD1B2) from Cavia porcellus (Guinea pig).